Consider the following 254-residue polypeptide: Phycobilisome rod-core linker polypeptide CpcG3 (254 aa).

In terms of domain architecture, PBS-linker spans 11–191; it reads SSQNHRVKSF…DFQETAGTVK (181 aa).

It belongs to the phycobilisome linker protein family. The phycobilisome is a hemidiscoidal structure that is composed of two distinct substructures: a core complex and a number of rods radiating from the core.

It localises to the cellular thylakoid membrane. Rod-core linker protein required for attachment of phycocyanin to allophycocyanin in cores of phycobilisomes. Its function is as follows. Linker polypeptides determine the state of aggregation and the location of the disk-shaped phycobiliprotein units within the phycobilisome and modulate their spectroscopic properties in order to mediate a directed and optimal energy transfer. The protein is Phycobilisome rod-core linker polypeptide CpcG3 (cpcG3) of Mastigocladus laminosus (Fischerella sp.).